Reading from the N-terminus, the 276-residue chain is Src-like-adapter (276 aa).

A lipid anchor (N-myristoyl glycine) is attached at G2. Positions 22–82 (LDSDFLAVLS…PGICVARVYH (61 aa)) constitute an SH3 domain. One can recognise an SH2 domain in the interval 84-175 (WLFEGLGRDK…GLCCVLTTPC (92 aa)). The segment at 212–276 (EGTENPLGVD…FFSSPPYFED (65 aa)) is SLA C-terminal. S253 bears the Phosphoserine mark. The residue at position 273 (Y273) is a Phosphotyrosine.

In terms of assembly, interacts with EPHA2, VAV1, LCP2 and PDGFRB. Homodimer. Homodimerization and interaction with phosphorylated CBL occurs via its C-terminal domain. Interacts with phosphorylated proteins ZAP70, CD3Z, SYK and LAT via its SH2 domain. As to expression, expressed in lung and fetal brain. Weakly expressed in heart, adult brain, placenta, liver, skeletal muscle, kidney and pancreas.

Its subcellular location is the cytoplasm. It localises to the endosome. In terms of biological role, adapter protein, which negatively regulates T-cell receptor (TCR) signaling. Inhibits T-cell antigen-receptor induced activation of nuclear factor of activated T-cells. Involved in the negative regulation of positive selection and mitosis of T-cells. May act by linking signaling proteins such as ZAP70 with CBL, leading to a CBL dependent degradation of signaling proteins. The polypeptide is Src-like-adapter (SLA) (Homo sapiens (Human)).